Here is a 396-residue protein sequence, read N- to C-terminus: MAQDKFKRTKLHVNVGTIGHVDHGKTTLTAALTKVGAERFGGEFKAYDAIDAAPEEKARGITISTAHVEYETEVRHYAHVDCPGHADYVKNMITGAAQMDGAILVCSAADGPMPQTREHILLARQVGVPYIVVFLNKADMVDDAELLELVEMEVRELLSKYDFPGDDTPIVRGSALKALEGDQSEIGVPAIIRLAEALDTHIPNPERAIDRPFLMPVEDVFSISGRGTVVTGRVECGVIKVGDEVEIVGIRPTSKTIVTGVEMFRKLLDQGQAGDNAGLLLRGTKRDEVERGQVLAKPGSIKAHKEFEAEVYVLSKEEGGRHTPFFNGYTPQFYMRTTDITGKVCLPEGVEMVMPGDNVKVTVSLINPVAMGEGQRFAIREGGRTVGAGVVSKVIG.

One can recognise a tr-type G domain in the interval K10–E206. A G1 region spans residues G19–T26. Residue G19 to T26 participates in GTP binding. T26 is a Mg(2+) binding site. The tract at residues G60 to S64 is G2. The tract at residues D81 to G84 is G3. GTP-binding positions include D81 to H85 and N136 to D139. A G4 region spans residues N136–D139. Positions S174 to L176 are G5.

Belongs to the TRAFAC class translation factor GTPase superfamily. Classic translation factor GTPase family. EF-Tu/EF-1A subfamily. As to quaternary structure, monomer.

It localises to the cytoplasm. The enzyme catalyses GTP + H2O = GDP + phosphate + H(+). In terms of biological role, GTP hydrolase that promotes the GTP-dependent binding of aminoacyl-tRNA to the A-site of ribosomes during protein biosynthesis. This is Elongation factor Tu from Xylella fastidiosa (strain 9a5c).